Here is a 305-residue protein sequence, read N- to C-terminus: MEFISQFLEMLLAERALSKNSILSYKRDLLDFHNYLAKQKLSELNITTDNIRNWVEYLAENSLQARSINRKISTIKSYYEFLISENHTNLNPLLNIDLPKYQNKLPEILSIDDIKSLLEYCSQDISPEGARLNAMIHLLYASGLRVSELVSLKLSDILSNKVSREVKKIFSVLGKGNKERIIVINEPAINSLVKYLVVRDNFVNKTKPKNLIYLFPSSAAAGYMTRQNFAILLKSAALYAGLNPEHISPHVLRHSFASHLLEGGADLRVIQELLGHADISTTQIYTHLQTNHLKKALLHHPLSKN.

Positions 1-83 (MEFISQFLEM…TIKSYYEFLI (83 aa)) constitute a Core-binding (CB) domain. A Tyr recombinase domain is found at 104 to 298 (KLPEILSIDD…QTNHLKKALL (195 aa)). Residues Arg-145, Lys-175, His-250, Arg-253, and His-276 contribute to the active site. Tyr-285 acts as the O-(3'-phospho-DNA)-tyrosine intermediate in catalysis.

The protein belongs to the 'phage' integrase family. XerD subfamily. As to quaternary structure, forms a cyclic heterotetrameric complex composed of two molecules of XerC and two molecules of XerD.

It is found in the cytoplasm. Site-specific tyrosine recombinase, which acts by catalyzing the cutting and rejoining of the recombining DNA molecules. The XerC-XerD complex is essential to convert dimers of the bacterial chromosome into monomers to permit their segregation at cell division. It also contributes to the segregational stability of plasmids. The chain is Tyrosine recombinase XerD from Rickettsia bellii (strain RML369-C).